Reading from the N-terminus, the 232-residue chain is MAGRATATATAAGKDRSSFAVTCSLLSQFLKEKKGGGGGLQGLGLGLRPAPAAPPAAGAGGAFRPPPTTMNLLSGLDAPAVEVEPNTADTAADELPLIKAPADQQSDESASEAAGEKAQQLTIFYGGKVVVFENFPSTKVKDLLQIVSTGDGVDKNTGTAATQSLPRPAHNSLPDLPIARRNSLHRFLEKRKGRMNANAPYQANCTAAPSKQANGDKSWLGFGQEMTIKQEI.

The interval 54-73 (PPAAGAGGAFRPPPTTMNLL) is disordered. One can recognise a Tify domain in the interval 114 to 149 (AGEKAQQLTIFYGGKVVVFENFPSTKVKDLLQIVST). Positions 151 to 176 (DGVDKNTGTAATQSLPRPAHNSLPDL) are disordered. The span at 156–165 (NTGTAATQSL) shows a compositional bias: polar residues. The Jas signature appears at 177 to 202 (PIARRNSLHRFLEKRKGRMNANAPYQ). The Nuclear localization signal signature appears at 179–186 (ARRNSLHR).

This sequence belongs to the TIFY/JAZ family. In terms of assembly, interacts with BHLH148. Interacts with COI1B in a coronatine-dependent manner. Coronatine is an analog of jasmonoyl isoleucine (JA-Ile). Interacts with TIFY5/JAZ2, TIFY6B/JAZ4, TIFY9/JAZ5, TIFY11A, TIFY11D/JAZ12 and TIFY11G/JAZ15. In terms of processing, ubiquitinated. Increase in jasmonoyl isoleucine (JA-Ile) levels mediates its degradation via COI1B-mediated proteasome pathway.

The protein localises to the nucleus. It localises to the cytoplasm. The protein resides in the cytosol. Its function is as follows. Repressor of jasmonate (JA) responses. Acts as a repressor of JA-induced resistance to the bacterial blight pathogen Xanthomonas oryzae pv. oryzae (Xoo). Regulates JA-induced accumulation of linalool at the transcriptional level of linalool synthase gene LIS. Linalool is important for resistance to bacterial blight pathogen Xoo. The sequence is that of Protein TIFY 10c from Oryza sativa subsp. indica (Rice).